The chain runs to 152 residues: UPF0178 protein YaiI (152 aa).

This sequence belongs to the UPF0178 family.

The chain is UPF0178 protein YaiI from Escherichia coli O81 (strain ED1a).